The chain runs to 159 residues: MDAIATIVELVREVVEPVIEAPFELVDIEYGKIGSDMILSIFVDKPEGITLNDTADLTEMISPVLDTIKPDPFPEQYFLEITSPGLERPLKTKDAVAGAVGKYIHVGLYQAIDKQKVFEGTLLAFEEDELTMEYMDKTRKKTVQIPYSLVSKARLAVKL.

It belongs to the RimP family.

The protein localises to the cytoplasm. Functionally, required for maturation of 30S ribosomal subunits. The polypeptide is Ribosome maturation factor RimP (Streptococcus pneumoniae (strain 70585)).